Reading from the N-terminus, the 330-residue chain is Aspartate--ammonia ligase (330 aa).

It belongs to the class-II aminoacyl-tRNA synthetase family. AsnA subfamily.

It localises to the cytoplasm. It carries out the reaction L-aspartate + NH4(+) + ATP = L-asparagine + AMP + diphosphate + H(+). It functions in the pathway amino-acid biosynthesis; L-asparagine biosynthesis; L-asparagine from L-aspartate (ammonia route): step 1/1. This Escherichia coli O17:K52:H18 (strain UMN026 / ExPEC) protein is Aspartate--ammonia ligase.